The chain runs to 923 residues: SPX and EXS domain-containing protein 1 (923 aa).

The 326-residue stretch at 1 to 326 folds into the SPX domain; it reads MKFGKKLRFE…PMNSSIKLDQ (326 aa). 2 stretches are compositionally biased toward low complexity: residues 94-147 and 186-195; these read QEQS…QQQQ and TTTTTTTTTT. Disordered stretches follow at residues 94-150 and 185-208; these read QEQS…QDLK and PTTT…FKNK. The next 9 membrane-spanning stretches (helical) occupy residues 382-402, 416-436, 471-491, 499-519, 529-551, 591-611, 620-640, 655-675, and 700-720; these read LKLG…IILF, FVST…VWLW, ASFL…TVTG, PAQV…FFPF, LLFI…RALF, SIAL…QCIL, IHLG…FSAL, ILWC…DVVV, and WSYY…TLTI. Residues 585-785 enclose the EXS domain; the sequence is RCNQVNSIAL…KNEVPKVESP (201 aa). A disordered region spans residues 793 to 871; the sequence is SSYPYRQDNF…NNSPSGSNSS (79 aa).

Belongs to the SYG1 (TC 2.A.94) family.

It localises to the membrane. The sequence is that of SPX and EXS domain-containing protein 1 from Dictyostelium discoideum (Social amoeba).